Consider the following 209-residue polypeptide: Uracil phosphoribosyltransferase (209 aa).

Residues Arg-79, Arg-104, and 131 to 139 contribute to the 5-phospho-alpha-D-ribose 1-diphosphate site; that span reads DPMLATGGS. Uracil is bound by residues Ile-194 and 199–201; that span reads GDA. Asp-200 is a 5-phospho-alpha-D-ribose 1-diphosphate binding site.

The protein belongs to the UPRTase family. The cofactor is Mg(2+).

The enzyme catalyses UMP + diphosphate = 5-phospho-alpha-D-ribose 1-diphosphate + uracil. It functions in the pathway pyrimidine metabolism; UMP biosynthesis via salvage pathway; UMP from uracil: step 1/1. Its activity is regulated as follows. Allosterically activated by GTP. In terms of biological role, catalyzes the conversion of uracil and 5-phospho-alpha-D-ribose 1-diphosphate (PRPP) to UMP and diphosphate. The protein is Uracil phosphoribosyltransferase of Clostridium perfringens (strain ATCC 13124 / DSM 756 / JCM 1290 / NCIMB 6125 / NCTC 8237 / Type A).